Here is a 571-residue protein sequence, read N- to C-terminus: MSYDQAVLNRIWSETILTELHRFGVKHVCIAPGSRSTPLTLEAAEQPNFSIHTHFDERGLGFMALGLAKASQEPVAVIVTSGTAVANLLPAVAEAKLTGEKLVLLTADRPVELVGCGANQAINQLGIFSQHVSANLNLPSPSLNTPLNWLLTSVDEVMFNQQLHGSAVHINCAFPEPLYSDGEKSAYQSYLSSVEAWRKGGQTYTQRFVSPSFRDIPFCADRKGVVVIGSLSAEHAQEAKAFAQQMGWPVLADPQSGVSSDWSHYDLWLQQPKLASQLDECDLVLQFGSRIISKRLNQWINKQVSQSQQGRDVQYWFISPSLSRDNQTHLPQLHWVASPKSWVERVDVKSSSTQGWADGLLTDIAHVRAHISDEFLFSSASTLNEIALAADIEERTQSVDVFLGNSLFVRLVDMFGRLNTEVFTNRGASGIDGLFATASGVQRSRGKPLLMYIGDTSALYDLNSLALFSRNDLPSVLVVTNNDGGAIFDMLPVPQEHRTAYYQMPHGYQFEHAAKQFGLKYEKPTTLQMYQAMVADHLSSGQGTMLVEVQTPPSQAAELIKAFNKSLHASL.

It belongs to the TPP enzyme family. MenD subfamily. In terms of assembly, homodimer. It depends on Mg(2+) as a cofactor. Requires Mn(2+) as cofactor. The cofactor is thiamine diphosphate.

The enzyme catalyses isochorismate + 2-oxoglutarate + H(+) = 5-enolpyruvoyl-6-hydroxy-2-succinyl-cyclohex-3-ene-1-carboxylate + CO2. It functions in the pathway quinol/quinone metabolism; 1,4-dihydroxy-2-naphthoate biosynthesis; 1,4-dihydroxy-2-naphthoate from chorismate: step 2/7. Its pathway is quinol/quinone metabolism; menaquinone biosynthesis. In terms of biological role, catalyzes the thiamine diphosphate-dependent decarboxylation of 2-oxoglutarate and the subsequent addition of the resulting succinic semialdehyde-thiamine pyrophosphate anion to isochorismate to yield 2-succinyl-5-enolpyruvyl-6-hydroxy-3-cyclohexene-1-carboxylate (SEPHCHC). The polypeptide is 2-succinyl-5-enolpyruvyl-6-hydroxy-3-cyclohexene-1-carboxylate synthase (Vibrio parahaemolyticus serotype O3:K6 (strain RIMD 2210633)).